A 547-amino-acid chain; its full sequence is Chaperonin GroEL (547 aa).

ATP-binding positions include 30 to 33 (TLGP), K51, 87 to 91 (DGTTT), G415, 479 to 481 (NAA), and D495. The tract at residues 524–547 (APKKDEPTPPAAGGGMGGMGGMDF) is disordered. Residues 535-547 (AGGGMGGMGGMDF) are compositionally biased toward gly residues.

It belongs to the chaperonin (HSP60) family. As to quaternary structure, forms a cylinder of 14 subunits composed of two heptameric rings stacked back-to-back. Interacts with the co-chaperonin GroES.

It is found in the cytoplasm. The catalysed reaction is ATP + H2O + a folded polypeptide = ADP + phosphate + an unfolded polypeptide.. Its function is as follows. Together with its co-chaperonin GroES, plays an essential role in assisting protein folding. The GroEL-GroES system forms a nano-cage that allows encapsulation of the non-native substrate proteins and provides a physical environment optimized to promote and accelerate protein folding. The sequence is that of Chaperonin GroEL from Xylella fastidiosa (strain 9a5c).